The sequence spans 118 residues: Ribonuclease P protein component (118 aa).

This sequence belongs to the RnpA family. In terms of assembly, consists of a catalytic RNA component (M1 or rnpB) and a protein subunit.

The catalysed reaction is Endonucleolytic cleavage of RNA, removing 5'-extranucleotides from tRNA precursor.. In terms of biological role, RNaseP catalyzes the removal of the 5'-leader sequence from pre-tRNA to produce the mature 5'-terminus. It can also cleave other RNA substrates such as 4.5S RNA. The protein component plays an auxiliary but essential role in vivo by binding to the 5'-leader sequence and broadening the substrate specificity of the ribozyme. The protein is Ribonuclease P protein component of Rickettsia peacockii (strain Rustic).